A 573-amino-acid polypeptide reads, in one-letter code: MAKTNKQMSEELDKKLDALEYLKDESNYLRGTIEQGLADPLTGAISDDDTKLLKFHGSYQQDDRDLRDERRKQKLEPAYSFMIRVRLPGGTATPEQWLAMDDISNNYANQTLKLTTRQTFQFHGILKRNLKTSMKKINESVLDTIAACGDVNRNTMCNPNPYQSHIHKEINNYATKISDHLLPKTNAYHEIWLDGEKVLDSSEEIEPMYGKKYLPRKFKIGIALPPSNDIDVYSQDIGLIGIVEDETLVGFNVTVGGGMGMTHGNTDTYPQVGRLAGFVPKEQVVDVCEKILTIQRDYGNRENRKNARFKYTVDRLGVDKVVEELNTRLGWEIEEPRDFEFEHNGDRLGWIEGDKGVWNYTLFIQNGRVKDTEDYQLKTALRKIAETHTGDFRLSPNQNLIIANVTPEKKEEIQSLIDQYGLTDGKNYTGLRRNSMACVAFPTCGLAMAESERYLPSLISKIEDLLDEAGVDDEEITIRMTGCPNGCARPALAEIAFIGKAPGKYNMYLGGGFKGERLNKLYKENIGEQEILESLRPILMDYGKERLEGEHFGDFVIRSGVVAKVHGGQDFHS.

4 residues coordinate [4Fe-4S] cluster: cysteine 438, cysteine 444, cysteine 483, and cysteine 487. Cysteine 487 contributes to the siroheme binding site.

It belongs to the nitrite and sulfite reductase 4Fe-4S domain family. As to quaternary structure, alpha(8)-beta(8). The alpha component is a flavoprotein, the beta component is a hemoprotein. It depends on siroheme as a cofactor. Requires [4Fe-4S] cluster as cofactor.

The enzyme catalyses hydrogen sulfide + 3 NADP(+) + 3 H2O = sulfite + 3 NADPH + 4 H(+). It participates in sulfur metabolism; hydrogen sulfide biosynthesis; hydrogen sulfide from sulfite (NADPH route): step 1/1. Functionally, component of the sulfite reductase complex that catalyzes the 6-electron reduction of sulfite to sulfide. This is one of several activities required for the biosynthesis of L-cysteine from sulfate. The sequence is that of Sulfite reductase [NADPH] hemoprotein beta-component from Staphylococcus haemolyticus (strain JCSC1435).